We begin with the raw amino-acid sequence, 376 residues long: Metal tolerance protein 6 (376 aa).

Residues 1–28 (MAAAAGVAAGTGRGSGEGEELLPNAVEG) are disordered. Topologically, residues 1–123 (MAAAAGVAAG…CEKVARSEAL (123 aa)) are cytoplasmic. Residues 124 to 144 (AIRLSNIANMVLFAAKVYASI) traverse the membrane as a helical segment. The Vacuolar portion of the chain corresponds to 145 to 149 (RSGSL). The chain crosses the membrane as a helical span at residues 150-170 (AIIASTLDSLLDLLSGFILWF). Residues 171–191 (TAFSKKTSNPYRYPIGKRRMQ) are Cytoplasmic-facing. Residues 192–212 (PLGILVFASVMATLGLQIILE) traverse the membrane as a helical segment. The Vacuolar portion of the chain corresponds to 213 to 231 (STRSLFYDGDTFRLTKEQE). Residues 232 to 252 (KWVVDIMLSVTSVKLLLVVYC) form a helical membrane-spanning segment. Residues 253–376 (RSFTNEILAI…PEHARSHDTL (124 aa)) lie on the Cytoplasmic side of the membrane.

Belongs to the cation diffusion facilitator (CDF) transporter (TC 2.A.4) family. SLC30A subfamily.

Its subcellular location is the vacuole membrane. In terms of biological role, involved in sequestration of excess metal in the cytoplasm into vacuoles to maintain metal homeostasis. This Oryza sativa subsp. japonica (Rice) protein is Metal tolerance protein 6 (MTP6).